We begin with the raw amino-acid sequence, 355 residues long: UDP-N-acetylglucosamine--N-acetylmuramyl-(pentapeptide) pyrophosphoryl-undecaprenol N-acetylglucosamine transferase (355 aa).

UDP-N-acetyl-alpha-D-glucosamine contacts are provided by residues Thr-14–Gly-16, Asn-126, Arg-162, Ser-190, Ile-244, and Gln-289.

This sequence belongs to the glycosyltransferase 28 family. MurG subfamily.

It is found in the cell inner membrane. It carries out the reaction di-trans,octa-cis-undecaprenyl diphospho-N-acetyl-alpha-D-muramoyl-L-alanyl-D-glutamyl-meso-2,6-diaminopimeloyl-D-alanyl-D-alanine + UDP-N-acetyl-alpha-D-glucosamine = di-trans,octa-cis-undecaprenyl diphospho-[N-acetyl-alpha-D-glucosaminyl-(1-&gt;4)]-N-acetyl-alpha-D-muramoyl-L-alanyl-D-glutamyl-meso-2,6-diaminopimeloyl-D-alanyl-D-alanine + UDP + H(+). The protein operates within cell wall biogenesis; peptidoglycan biosynthesis. Functionally, cell wall formation. Catalyzes the transfer of a GlcNAc subunit on undecaprenyl-pyrophosphoryl-MurNAc-pentapeptide (lipid intermediate I) to form undecaprenyl-pyrophosphoryl-MurNAc-(pentapeptide)GlcNAc (lipid intermediate II). This chain is UDP-N-acetylglucosamine--N-acetylmuramyl-(pentapeptide) pyrophosphoryl-undecaprenol N-acetylglucosamine transferase, found in Paracidovorax citrulli (strain AAC00-1) (Acidovorax citrulli).